A 332-amino-acid chain; its full sequence is Lipoyl synthase (332 aa).

Residues Cys74, Cys79, Cys85, Cys100, Cys104, Cys107, and Ser314 each coordinate [4Fe-4S] cluster. The Radical SAM core domain occupies 85–303 (CFGKGTATFM…EEEAYKMGFT (219 aa)).

It belongs to the radical SAM superfamily. Lipoyl synthase family. The cofactor is [4Fe-4S] cluster.

Its subcellular location is the cytoplasm. The enzyme catalyses [[Fe-S] cluster scaffold protein carrying a second [4Fe-4S](2+) cluster] + N(6)-octanoyl-L-lysyl-[protein] + 2 oxidized [2Fe-2S]-[ferredoxin] + 2 S-adenosyl-L-methionine + 4 H(+) = [[Fe-S] cluster scaffold protein] + N(6)-[(R)-dihydrolipoyl]-L-lysyl-[protein] + 4 Fe(3+) + 2 hydrogen sulfide + 2 5'-deoxyadenosine + 2 L-methionine + 2 reduced [2Fe-2S]-[ferredoxin]. Its pathway is protein modification; protein lipoylation via endogenous pathway; protein N(6)-(lipoyl)lysine from octanoyl-[acyl-carrier-protein]: step 2/2. Its function is as follows. Catalyzes the radical-mediated insertion of two sulfur atoms into the C-6 and C-8 positions of the octanoyl moiety bound to the lipoyl domains of lipoate-dependent enzymes, thereby converting the octanoylated domains into lipoylated derivatives. In Paracidovorax citrulli (strain AAC00-1) (Acidovorax citrulli), this protein is Lipoyl synthase.